We begin with the raw amino-acid sequence, 75 residues long: Movement protein TGBp3 (75 aa).

The Lumenal portion of the chain corresponds to Met1 to Arg2. A helical membrane pass occupies residues Val3 to Val23. The Cytoplasmic segment spans residues Ser24 to Trp75.

Belongs to the Tymovirales TGBp3 protein family.

The protein localises to the host endoplasmic reticulum membrane. Its function is as follows. Plays a role in viral cell-to-cell propagation, by facilitating genome transport to neighboring plant cells through plasmosdesmata. May induce the formation of granular vesicles derived from the Endoplasmic reticulum, which align on actin filaments. The polypeptide is Movement protein TGBp3 (Strawberry mild yellow edge-associated virus (SMYEaV)).